The primary structure comprises 930 residues: Carnosine synthase 1 (930 aa).

A disordered region spans residues 1–24 (MISVDRLSEEQALGMKEQEWAGPE). One can recognise an ATP-grasp domain in the interval 624–825 (RPPPAAFSVP…LLLAAVLLAL (202 aa)). 650-716 (VPFPAVAKLE…MEYVPGTEHD (67 aa)) lines the ATP pocket. Mg(2+) contacts are provided by E782, E794, and N796. Residues E782, E794, and N796 each contribute to the Mn(2+) site.

As to quaternary structure, homotetramer. Mg(2+) is required as a cofactor. It depends on Mn(2+) as a cofactor.

The enzyme catalyses beta-alanine + L-histidine + ATP = carnosine + ADP + phosphate + H(+). The catalysed reaction is 4-aminobutanoate + L-histidine + ATP = L-homocarnosine + ADP + phosphate + H(+). In terms of biological role, catalyzes the synthesis of carnosine and homocarnosine. Carnosine is synthesized more efficiently than homocarnosine. In Gallus gallus (Chicken), this protein is Carnosine synthase 1.